The chain runs to 333 residues: Beta-ketoacyl-[acyl-carrier-protein] synthase III (333 aa).

Residues C112 and H255 contribute to the active site. The interval 256 to 260 is ACP-binding; sequence QANQR. N285 is a catalytic residue.

It belongs to the thiolase-like superfamily. FabH family. In terms of assembly, homodimer.

It localises to the cytoplasm. It catalyses the reaction malonyl-[ACP] + acetyl-CoA + H(+) = 3-oxobutanoyl-[ACP] + CO2 + CoA. It functions in the pathway lipid metabolism; fatty acid biosynthesis. Its function is as follows. Catalyzes the condensation reaction of fatty acid synthesis by the addition to an acyl acceptor of two carbons from malonyl-ACP. Catalyzes the first condensation reaction which initiates fatty acid synthesis and may therefore play a role in governing the total rate of fatty acid production. Possesses both acetoacetyl-ACP synthase and acetyl transacylase activities. Its substrate specificity determines the biosynthesis of branched-chain and/or straight-chain of fatty acids. The polypeptide is Beta-ketoacyl-[acyl-carrier-protein] synthase III (Synechococcus sp. (strain RCC307)).